Reading from the N-terminus, the 237-residue chain is Putative anti-FlhC(2)FlhD(4) factor YdiV (237 aa).

Residues 1-237 (MKIFLENLYH…INQITTLVQR (237 aa)) enclose the EAL domain.

Belongs to the YdiV family.

Upon overexpression acts as a novel anti-FlhC(2)FlhD(4) factor, decreasing its DNA-binding activity, able to negatively regulate expression of flagellar class II operons including FliC. This chain is Putative anti-FlhC(2)FlhD(4) factor YdiV (ydiV), found in Escherichia coli (strain K12).